The following is a 122-amino-acid chain: MIQPQTLLNVADNSGARELMCIRIIGASNRRYAHIGDVIVAVIKEAVPNMPLARSEVVRAVIVRTCKELKRDNGMIIRYDDNAAVVIDQEGNPKGTRVFGAIARELRQLNFTKIVSLAPEVL.

Belongs to the universal ribosomal protein uL14 family. Part of the 50S ribosomal subunit.

The protein resides in the plastid. It is found in the chloroplast. Its function is as follows. Binds to 23S rRNA. This Panax ginseng (Korean ginseng) protein is Large ribosomal subunit protein uL14c.